The following is a 198-amino-acid chain: Protein GrpE (198 aa).

Belongs to the GrpE family. In terms of assembly, homodimer.

The protein localises to the cytoplasm. Participates actively in the response to hyperosmotic and heat shock by preventing the aggregation of stress-denatured proteins, in association with DnaK and GrpE. It is the nucleotide exchange factor for DnaK and may function as a thermosensor. Unfolded proteins bind initially to DnaJ; upon interaction with the DnaJ-bound protein, DnaK hydrolyzes its bound ATP, resulting in the formation of a stable complex. GrpE releases ADP from DnaK; ATP binding to DnaK triggers the release of the substrate protein, thus completing the reaction cycle. Several rounds of ATP-dependent interactions between DnaJ, DnaK and GrpE are required for fully efficient folding. The chain is Protein GrpE from Actinobacillus pleuropneumoniae serotype 5b (strain L20).